Reading from the N-terminus, the 182-residue chain is UPF0690 protein C1orf52 homolog (182 aa).

Positions 1 to 61 (MAAEEKDPLS…AEKRLPGPDE (61 aa)) are disordered. Positions 23–32 (SDEEDNSEPE) are enriched in acidic residues. The segment covering 51 to 61 (KAEKRLPGPDE) has biased composition (basic and acidic residues). Thr-67 bears the Phosphothreonine mark. The residue at position 132 (Tyr-132) is a Phosphotyrosine. The disordered stretch occupies residues 132–182 (YEDNGDDAPQNAKKARLLPEGEETVESDDEKDEHTSKKRKIELGEPTKKKK). Residues 151 to 162 (EGEETVESDDEK) show a composition bias toward acidic residues. Ser-158 carries the post-translational modification Phosphoserine. Basic and acidic residues predominate over residues 172-182 (IELGEPTKKKK).

This sequence belongs to the UPF0690 family.

This chain is UPF0690 protein C1orf52 homolog, found in Bos taurus (Bovine).